Here is a 1168-residue protein sequence, read N- to C-terminus: TBC1 domain family member 1 (1168 aa).

The residue at position 146 (S146) is a Phosphoserine. The disordered stretch occupies residues 203–238; sequence VSGSRGSESPRPNPPHAAPTGSQEPVRRPMRKSFSQ. S235 bears the Phosphoserine; by PKB/AKT1 mark. Position 237 is a phosphoserine (S237). Residues 246–404 enclose the PID domain; it reads FRKELQDGGL…LHKLCERIEG (159 aa). S503 carries the phosphoserine modification. Position 505 is a phosphothreonine; by PKB/AKT1 (T505). A phosphoserine mark is found at S507, S525, and S527. Low complexity predominate over residues 532 to 542; it reads SSLSSTLSNTS. 2 disordered regions span residues 532-551 and 564-587; these read SSLSSTLSNTSKEPSVCEKE and GSSEDLSSDSESHLPEEPAPLSPQ. A phosphoserine mark is found at S565, S566, S570, S571, and S585. T596 carries the phosphothreonine modification. A Phosphoserine modification is found at S614. S627 carries the post-translational modification Phosphoserine; by PKB/AKT1. Disordered stretches follow at residues 628 to 658 and 678 to 717; these read VSTETPHERKDFESKANHLGDSGGTPVKTRR and SSSRYEDYSELGELPPRSPLEPVCEDGPFGPPPEEKKRTS. Over residues 632–645 the composition is skewed to basic and acidic residues; it reads TPHERKDFESKANH. Phosphoserine is present on residues S695 and S941. The 195-residue stretch at 800–994 folds into the Rab-GAP TBC domain; that stretch reads GVPRHHRGEI…RVFDMIFLQG (195 aa). Residue Y952 is modified to Phosphotyrosine. Position 1131 is a phosphothreonine (T1131). Positions 1145-1159 are enriched in basic and acidic residues; it reads ELRRRSAEPSDREPE. The interval 1145 to 1168 is disordered; the sequence is ELRRRSAEPSDREPECTQPEPTGD.

In terms of assembly, interacts with APPL2 (via BAR domain); interaction is dependent of TBC1D1 phosphorylation at Ser-235; interaction diminishes the phosphorylation of TBC1D1 at Thr-596, resulting in inhibition of SLC2A4/GLUT4 translocation and glucose uptake. Post-translationally, insulin-stimulated phosphorylation by AKT family kinases stimulates SLC2A4/GLUT4 translocation.

The protein localises to the nucleus. In terms of biological role, may act as a GTPase-activating protein for Rab family protein(s). May play a role in the cell cycle and differentiation of various tissues. Involved in the trafficking and translocation of GLUT4-containing vesicles and insulin-stimulated glucose uptake into cells. The polypeptide is TBC1 domain family member 1 (TBC1D1) (Homo sapiens (Human)).